The primary structure comprises 483 residues: Glutamyl-tRNA(Gln) amidotransferase subunit A (483 aa).

Catalysis depends on charge relay system residues lysine 77 and serine 152. Serine 176 functions as the Acyl-ester intermediate in the catalytic mechanism.

The protein belongs to the amidase family. GatA subfamily. In terms of assembly, heterotrimer of A, B and C subunits.

It catalyses the reaction L-glutamyl-tRNA(Gln) + L-glutamine + ATP + H2O = L-glutaminyl-tRNA(Gln) + L-glutamate + ADP + phosphate + H(+). Allows the formation of correctly charged Gln-tRNA(Gln) through the transamidation of misacylated Glu-tRNA(Gln) in organisms which lack glutaminyl-tRNA synthetase. The reaction takes place in the presence of glutamine and ATP through an activated gamma-phospho-Glu-tRNA(Gln). The chain is Glutamyl-tRNA(Gln) amidotransferase subunit A from Shouchella clausii (strain KSM-K16) (Alkalihalobacillus clausii).